Reading from the N-terminus, the 230-residue chain is Urease accessory protein UreF (230 aa).

This sequence belongs to the UreF family. In terms of assembly, ureD, UreF and UreG form a complex that acts as a GTP-hydrolysis-dependent molecular chaperone, activating the urease apoprotein by helping to assemble the nickel containing metallocenter of UreC. The UreE protein probably delivers the nickel.

It localises to the cytoplasm. Its function is as follows. Required for maturation of urease via the functional incorporation of the urease nickel metallocenter. The sequence is that of Urease accessory protein UreF from Marinomonas sp. (strain MWYL1).